We begin with the raw amino-acid sequence, 4857 residues long: Dual E2 ubiquitin-conjugating enzyme/E3 ubiquitin-protein ligase BIRC6 (4857 aa).

2 WD repeats span residues 68-106 and 107-136; these read DGLH…QASA and LSAK…AVGC. The BIR repeat unit spans residues 268–377; that stretch reads PELGVGPGRS…LSVTLATSPA (110 aa). Residues Cys328, Cys331, His348, and Cys355 each coordinate Zn(2+). The stretch at 379 to 426 is one WD 3 repeat; the sequence is FPCTDGTDRISCFGSGSCPHFLAAATKRGKICIWDVSKLMKVHLKFEI. Disordered regions lie at residues 465 to 498 and 579 to 618; these read DIPK…TSQK and ATSP…NSEL. Acidic residues predominate over residues 472 to 482; that stretch reads DSDDLLEDSDS. A phosphoserine mark is found at Ser473, Ser480, Ser482, Ser581, and Ser590. WD repeat units follow at residues 501–720, 730–850, 851–927, and 928–966; these read MEVS…VQCL, NLCI…QHIK, DPQD…AKVE, and PPKK…FLQI. Residues 579-588 are compositionally biased toward polar residues; it reads ATSPISSNSH. Positions 595–618 are enriched in polar residues; it reads SRTQGESISEQGSTDNESCTNSEL. Disordered stretches follow at residues 984–1004 and 1053–1073; these read LSKG…PSSP and QQQR…AAQH. A compositionally biased stretch (polar residues) spans 992–1004; the sequence is SEGSKPLSNPSSP. Over residues 1056–1065 the composition is skewed to basic residues; the sequence is RRHPQHLHQQ. Thr1710 bears the Phosphothreonine mark. 2 positions are modified to phosphoserine: Ser2222 and Ser2955. Positions 2945 to 2973 are disordered; that stretch reads SVTTNTTDSVSDEEKVSGGKDGNGSSTSV. The tract at residues 3189–3193 is HRRAR loop; important for DIABLO/SMAC and HTRA2 binding; it reads HRRAR. Residues 3819-4068 enclose the Ubiquitin-like domain; it reads DEKVTMFLQS…ESLLETCPIQ (250 aa). A disordered region spans residues 3923–3949; that stretch reads QSKRAVSATPPRPPSRRGRTIPDKIGS. Thr3931 bears the Phosphothreonine mark. A Phosphoserine modification is found at Ser4023. Positions 4260-4283 are disordered; the sequence is RVPNSSVNQTEPQVSSSHNPTSTE. Positions 4261 to 4283 are enriched in polar residues; the sequence is VPNSSVNQTEPQVSSSHNPTSTE. Residues 4573–4740 enclose the UBC core domain; that stretch reads ARARRLAQEA…IRQATVKWAM (168 aa). The Glycyl thioester intermediate role is filled by Cys4666. The interval 4835-4857 is disordered; the sequence is EETLMHDQVKPSSSKELPSDFQL. Polar residues predominate over residues 4844-4857; it reads KPSSSKELPSDFQL.

This sequence belongs to the BIRC6 family. Homodimer; antiparallel. Interacts with RNF41. Interacts with DIABLO/SMAC, likely with higher affinity to SMAC dimer than SMAC monomer; this interaction blocks the substrate-binding site and inhibits the caspase inhibition activity of BIRC6. Interacts with KIF23/MKLP1, USP8/UBPY, BIRC5/survivin, MAP2K1/MEK1, RAB8A/RAB8, RAB11A/RAB11, PLK1, EXOC3/SEC6 and EXOC4/SEC8. In terms of processing, ubiquitinated; mediated by RNF41 E3 ligase and leads to proteasomal degradation, impairing inhibition of apoptosis. Deubiquitinated by USP8/UBPY. Autoubiquitinated; mediated by E1 ubiquitin activating enzyme UBA6. Proteolytically cleaved. Acts as substrate for CASP3, CASP6, CASP7, CASP9 and HTRA2. As to expression, expressed in brain cancer cells.

The protein resides in the golgi apparatus. The protein localises to the trans-Golgi network membrane. It is found in the endosome. Its subcellular location is the cytoplasm. It localises to the cytoskeleton. The protein resides in the spindle pole. The protein localises to the microtubule organizing center. It is found in the centrosome. Its subcellular location is the midbody. It localises to the midbody ring. It catalyses the reaction S-ubiquitinyl-[E1 ubiquitin-activating enzyme]-L-cysteine + [acceptor protein]-L-lysine = [E1 ubiquitin-activating enzyme]-L-cysteine + N(6)-monoubiquitinyl-[acceptor protein]-L-lysine.. With respect to regulation, inhibited by DIABLO/SMAC, which competes for the substrate-binding sites on BIRC6. BIRC6 inhibits caspases and protease by ubiquitination but BIRC6 itself is subjected to protease cleavage by CASP3, CASP6, CASP7, CASP9 and HTRA2 by protease cleavage. Its function is as follows. Anti-apoptotic protein known as inhibitor of apoptosis (IAP) which can regulate cell death by controlling caspases and by acting as an E3 ubiquitin-protein ligase. Unlike most IAPs, does not contain a RING domain and it is not a RING-type E3 ligase. Instead acts as a dual E2/E3 enzyme that combines ubiquitin conjugating (E2) and ubiquitin ligase (E3) activities in a single polypeptide. Ubiquitination is mediated by a non-canonical E1 ubiquitin activating enzyme UBA6. Ubiquitinates CASP3, CASP7 and CASP9 and inhibits their caspase activity; also ubiquitinates their procaspases but to a weaker extent. Ubiquitinates pro-apoptotic factors DIABLO/SMAC and HTRA2. DIABLO/SMAC antagonizes the caspase inhibition activity of BIRC6 by competing for the same binding sites as the caspases. Ubiquitinates the autophagy protein MAP1LC3B; this activity is also inhibited by DIABLO/SMAC. Important regulator for the final stages of cytokinesis. Crucial for normal vesicle targeting to the site of abscission, but also for the integrity of the midbody and the midbody ring, and its striking ubiquitin modification. The chain is Dual E2 ubiquitin-conjugating enzyme/E3 ubiquitin-protein ligase BIRC6 (BIRC6) from Homo sapiens (Human).